The following is a 170-amino-acid chain: MNSRLCIMALLLCFSQALLGHFTVIEEIEKLKKYFNSSSSDVGDQKDIVSDILRNWQNDRDVKVIESQIVSFYLKLFEALKEHKTIQESINTIRADLIVNFFNNSREKMDDFIKLTTIPVNDLQVQRKAVNELVGVMHRLSSNIRRKKKGSRCCFGGGDRLNQNYPARSI.

An N-terminal signal peptide occupies residues 1–20 (MNSRLCIMALLLCFSQALLG). N-linked (GlcNAc...) asparagine glycosylation is found at asparagine 36 and asparagine 103.

It belongs to the type II (or gamma) interferon family. In terms of assembly, homodimer. Interacts with IFNGR1 (via extracellular domain); this interaction promotes IFNGR1 dimerization. As to expression, released primarily from activated T lymphocytes.

The protein localises to the secreted. Type II interferon produced by immune cells such as T-cells and NK cells that plays crucial roles in antimicrobial, antiviral, and antitumor responses by activating effector immune cells and enhancing antigen presentation. Primarily signals through the JAK-STAT pathway after interaction with its receptor IFNGR1 to affect gene regulation. Upon IFNG binding, IFNGR1 intracellular domain opens out to allow association of downstream signaling components JAK2, JAK1 and STAT1, leading to STAT1 activation, nuclear translocation and transcription of IFNG-regulated genes. Many of the induced genes are transcription factors such as IRF1 that are able to further drive regulation of a next wave of transcription. Plays a role in class I antigen presentation pathway by inducing a replacement of catalytic proteasome subunits with immunoproteasome subunits. In turn, increases the quantity, quality, and repertoire of peptides for class I MHC loading. Increases the efficiency of peptide generation also by inducing the expression of activator PA28 that associates with the proteasome and alters its proteolytic cleavage preference. Up-regulates as well MHC II complexes on the cell surface by promoting expression of several key molecules such as cathepsins B/CTSB, H/CTSH, and L/CTSL. Participates in the regulation of hematopoietic stem cells during development and under homeostatic conditions by affecting their development, quiescence, and differentiation. The polypeptide is Interferon gamma (IFNG) (Sigmodon hispidus (Hispid cotton rat)).